A 454-amino-acid polypeptide reads, in one-letter code: tRNA modification GTPase MnmE (454 aa).

Residues arginine 23, glutamate 80, and lysine 120 each contribute to the (6S)-5-formyl-5,6,7,8-tetrahydrofolate site. Positions 216–377 constitute a TrmE-type G domain; the sequence is GMKVVIAGRP…LRNHLKQSMG (162 aa). Asparagine 226 contacts K(+). GTP contacts are provided by residues 226–231, 245–251, 270–273, 335–338, and 358–360; these read NAGKSS, TDIAGTT, DTAG, NKAD, and SAR. Serine 230 lines the Mg(2+) pocket. K(+) is bound by residues threonine 245, isoleucine 247, and threonine 250. Residue threonine 251 coordinates Mg(2+). Lysine 454 is a binding site for (6S)-5-formyl-5,6,7,8-tetrahydrofolate.

This sequence belongs to the TRAFAC class TrmE-Era-EngA-EngB-Septin-like GTPase superfamily. TrmE GTPase family. As to quaternary structure, homodimer. Heterotetramer of two MnmE and two MnmG subunits. K(+) serves as cofactor.

The protein resides in the cytoplasm. Exhibits a very high intrinsic GTPase hydrolysis rate. Involved in the addition of a carboxymethylaminomethyl (cmnm) group at the wobble position (U34) of certain tRNAs, forming tRNA-cmnm(5)s(2)U34. The sequence is that of tRNA modification GTPase MnmE from Escherichia coli O7:K1 (strain IAI39 / ExPEC).